The following is a 1314-amino-acid chain: Phosphoribosylformylglycinamidine synthase (1314 aa).

Residues 307-318 (GAATGAGGEIRD) and Ala-674 each bind ATP. The Mg(2+) site is built by Asp-675, Glu-714, Asn-718, and Asp-880. Ser-882 is a binding site for ATP. The Glutamine amidotransferase type-1 domain occupies 1063–1314 (IAILREQGVN…LFAGARKALG (252 aa)). Cys-1156 serves as the catalytic Nucleophile. Active-site residues include His-1279 and Glu-1281.

The protein in the N-terminal section; belongs to the FGAMS family. Monomer.

The protein localises to the cytoplasm. It carries out the reaction N(2)-formyl-N(1)-(5-phospho-beta-D-ribosyl)glycinamide + L-glutamine + ATP + H2O = 2-formamido-N(1)-(5-O-phospho-beta-D-ribosyl)acetamidine + L-glutamate + ADP + phosphate + H(+). Its pathway is purine metabolism; IMP biosynthesis via de novo pathway; 5-amino-1-(5-phospho-D-ribosyl)imidazole from N(2)-formyl-N(1)-(5-phospho-D-ribosyl)glycinamide: step 1/2. Its function is as follows. Phosphoribosylformylglycinamidine synthase involved in the purines biosynthetic pathway. Catalyzes the ATP-dependent conversion of formylglycinamide ribonucleotide (FGAR) and glutamine to yield formylglycinamidine ribonucleotide (FGAM) and glutamate. The chain is Phosphoribosylformylglycinamidine synthase from Neisseria gonorrhoeae (strain ATCC 700825 / FA 1090).